Here is a 158-residue protein sequence, read N- to C-terminus: Large ribosomal subunit protein uL15 (158 aa).

Positions 1–13 (MKLNEIKDNEGST) are enriched in basic and acidic residues. The tract at residues 1–45 (MKLNEIKDNEGSTHSRKRLGRGIGSGSGKTGGRGVKGQKSRSGVA) is disordered. Gly residues predominate over residues 21–35 (RGIGSGSGKTGGRGV).

The protein belongs to the universal ribosomal protein uL15 family. As to quaternary structure, part of the 50S ribosomal subunit.

Binds to the 23S rRNA. The sequence is that of Large ribosomal subunit protein uL15 from Rhizobium etli (strain CIAT 652).